We begin with the raw amino-acid sequence, 192 residues long: Xanthine phosphoribosyltransferase (192 aa).

Positions 20 and 27 each coordinate xanthine. A 5-phospho-alpha-D-ribose 1-diphosphate-binding site is contributed by 128–132; the sequence is AHGEA. Residue Lys156 coordinates xanthine.

The protein belongs to the purine/pyrimidine phosphoribosyltransferase family. Xpt subfamily. In terms of assembly, homodimer.

The protein localises to the cytoplasm. The catalysed reaction is XMP + diphosphate = xanthine + 5-phospho-alpha-D-ribose 1-diphosphate. The protein operates within purine metabolism; XMP biosynthesis via salvage pathway; XMP from xanthine: step 1/1. In terms of biological role, converts the preformed base xanthine, a product of nucleic acid breakdown, to xanthosine 5'-monophosphate (XMP), so it can be reused for RNA or DNA synthesis. The polypeptide is Xanthine phosphoribosyltransferase (Lactobacillus gasseri (strain ATCC 33323 / DSM 20243 / BCRC 14619 / CIP 102991 / JCM 1131 / KCTC 3163 / NCIMB 11718 / NCTC 13722 / AM63)).